We begin with the raw amino-acid sequence, 280 residues long: 2-dehydro-3-deoxyphosphooctonate aldolase (280 aa).

This sequence belongs to the KdsA family.

It is found in the cytoplasm. The enzyme catalyses D-arabinose 5-phosphate + phosphoenolpyruvate + H2O = 3-deoxy-alpha-D-manno-2-octulosonate-8-phosphate + phosphate. It participates in carbohydrate biosynthesis; 3-deoxy-D-manno-octulosonate biosynthesis; 3-deoxy-D-manno-octulosonate from D-ribulose 5-phosphate: step 2/3. It functions in the pathway bacterial outer membrane biogenesis; lipopolysaccharide biosynthesis. This is 2-dehydro-3-deoxyphosphooctonate aldolase from Rhizobium meliloti (strain 1021) (Ensifer meliloti).